A 543-amino-acid chain; its full sequence is ATP-dependent ubiquitin transferase-like protein Cap2 (543 aa).

The E2-like domain stretch occupies residues 1 to 159 (MSSAAAVADV…QNCIVAHANG (159 aa)). The active-site For E2-like domain is the Cys-84. The segment at 160-305 (CPLWFITDNE…YLAQRNMPNS (146 aa)) is linker domain. The adenylation plus E1-like domain stretch occupies residues 306–543 (KTLAGKNIAV…RDRECPLCNS (238 aa)). Catalysis depends on for E1-like domain residues Cys-450 and Cys-453.

The protein in the C-terminal section; belongs to the HesA/MoeB/ThiF family. In terms of assembly, forms a Cap2-CdnA complex. A Cap2 dimer is bound on either side by a CdnA monomer.

In terms of biological role, CD-NTase priming component of a CBASS antiviral system. CBASS (cyclic oligonucleotide-based antiphage signaling system) provides immunity against bacteriophages. The CD-NTase protein (CdnA) synthesizes cyclic nucleotides in response to infection; these serve as specific second messenger signals. The signals activate a diverse range of effectors, leading to bacterial cell death and thus abortive phage infection. A type II-A(GA) CBASS system. Functionally, acts as a protein transferase, conjugating CdnA, the CD-NTase, to unidentified target(s) in the cell probably via an E1-E2 ubiquitin transferase-like mechanism. This primes CdnA, upon phage infection CdnA activates and makes cyclic nucleotides. Protein conjugation requires ATP. Its function is as follows. The capV-cdnA-cap2-cap3 operon provides about 10(4)-fold protection in strain BWHPSA011 against infection by phage PaMx41. In P.aeruginosa strain PAO1 it confers protection against phages PaMx41 and JBD18 but not JBD67 (JBD18 and JBD67 do not replicate in BWHPSA011 / Pa011). When acb2 in JBD67 is deleted this CBASS operon then protects against JDB67 also. This CBASS system limits prophage induction of lysogenized JBD67 as well as viral lytic replication. The protein is ATP-dependent ubiquitin transferase-like protein Cap2 of Pseudomonas aeruginosa (strain BWHPSA011 / Pa011).